Reading from the N-terminus, the 96-residue chain is Small ribosomal subunit protein bS6 (96 aa).

Belongs to the bacterial ribosomal protein bS6 family.

Functionally, binds together with bS18 to 16S ribosomal RNA. The chain is Small ribosomal subunit protein bS6 from Gloeobacter violaceus (strain ATCC 29082 / PCC 7421).